A 270-amino-acid chain; its full sequence is Phthiotriol/phenolphthiotriol dimycocerosates methyltransferase (270 aa).

Belongs to the methyltransferase superfamily. Phthiotriol/phenolphthiotriol dimycocerosates methyltransferase family.

Functionally, catalyzes the methylation of the lipid moiety of the intermediate compounds phthiotriol and glycosylated phenolphthiotriol dimycoserosates to form phthiocerol dimycocerosates (DIM A) and glycosylated phenolphthiocerol dimycocerosates (PGL). The chain is Phthiotriol/phenolphthiotriol dimycocerosates methyltransferase from Mycobacterium leprae (strain TN).